Reading from the N-terminus, the 367-residue chain is Alanine racemase (367 aa).

The active-site Proton acceptor; specific for D-alanine is the K34. K34 is subject to N6-(pyridoxal phosphate)lysine. R129 provides a ligand contact to substrate. The Proton acceptor; specific for L-alanine role is filled by Y251. Position 299 (M299) interacts with substrate.

This sequence belongs to the alanine racemase family. It depends on pyridoxal 5'-phosphate as a cofactor.

It catalyses the reaction L-alanine = D-alanine. It functions in the pathway amino-acid biosynthesis; D-alanine biosynthesis; D-alanine from L-alanine: step 1/1. Its function is as follows. Catalyzes the interconversion of L-alanine and D-alanine. May also act on other amino acids. In Thiobacillus denitrificans (strain ATCC 25259 / T1), this protein is Alanine racemase (alr).